A 223-amino-acid chain; its full sequence is Glutathione S-transferase A1 (223 aa).

Met1 carries the N-acetylmethionine modification. Ala2 carries the N-acetylalanine; in Glutathione S-transferase A1, N-terminally processed modification. The region spanning 3–83 is the GST N-terminal domain; it reads GKPVLHYFNA…YIATKYDLYG (81 aa). An N6-succinyllysine modification is found at Lys4. Residues Tyr9, Lys45, 54–55, and 67–68 each bind glutathione; these read QV and QT. A GST C-terminal domain is found at 85–208; the sequence is DMKERALIDM…QPGSQRKPPM (124 aa).

It belongs to the GST superfamily. Alpha family. As to quaternary structure, homodimer. Expressed in the liver, skin and kidney.

The enzyme catalyses RX + glutathione = an S-substituted glutathione + a halide anion + H(+). It carries out the reaction prostaglandin A2 + glutathione = prostaglandin A2-S-(R)-glutathione. The catalysed reaction is prostaglandin J2 + glutathione = prostaglandin J2-S-(R)-glutathione. It catalyses the reaction (13S)-hydroperoxy-(9Z,11E)-octadecadienoate + 2 glutathione = (13S)-hydroxy-(9Z,11E)-octadecadienoate + glutathione disulfide + H2O. The enzyme catalyses androst-5-ene-3,17-dione = androst-4-ene-3,17-dione. Glutathione S-transferase that catalyzes the nucleophilic attack of the sulfur atom of glutathione on the electrophilic groups of a wide range of exogenous and endogenous compounds. Involved in the formation of glutathione conjugates of both prostaglandin A2 (PGA2) and prostaglandin J2 (PGJ2). It also catalyzes the isomerization of D5-androstene-3,17-dione (AD) into D4-androstene-3,17-dione and may therefore play an important role in hormone biosynthesis. Through its glutathione-dependent peroxidase activity toward the fatty acid hydroperoxide (13S)-hydroperoxy-(9Z,11E)-octadecadienoate/13-HPODE it is also involved in the metabolism of oxidized linoleic acid. This Mus musculus (Mouse) protein is Glutathione S-transferase A1 (Gsta1).